The sequence spans 744 residues: Elongation factor G, mitochondrial (744 aa).

The 278-residue stretch at 39–316 folds into the tr-type G domain; sequence EKIRNIGISA…AVIDYLPNPG (278 aa). Residues 48 to 55, 115 to 119, and 169 to 172 contribute to the GTP site; these read AHIDSGKT, DTPGH, and NKLD. Residues 725-735 show a composition bias toward polar residues; the sequence is VRQYQETQGAS. The disordered stretch occupies residues 725-744; that stretch reads VRQYQETQGASQPDKKKKKN.

The protein belongs to the TRAFAC class translation factor GTPase superfamily. Classic translation factor GTPase family. EF-G/EF-2 subfamily.

The protein resides in the mitochondrion. It functions in the pathway protein biosynthesis; polypeptide chain elongation. Its function is as follows. Mitochondrial GTPase that catalyzes the GTP-dependent ribosomal translocation step during translation elongation. During this step, the ribosome changes from the pre-translocational (PRE) to the post-translocational (POST) state as the newly formed A-site-bound peptidyl-tRNA and P-site-bound deacylated tRNA move to the P and E sites, respectively. Catalyzes the coordinated movement of the two tRNA molecules, the mRNA and conformational changes in the ribosome. Essential during development as it acts as a retrograde signal from mitochondria to the nucleus to slow down cell proliferation if mitochondrial energy output is low. The chain is Elongation factor G, mitochondrial from Drosophila pseudoobscura pseudoobscura (Fruit fly).